The chain runs to 207 residues: Serotonin N-acetyltransferase (207 aa).

The tract at residues 1-28 is disordered; it reads MSTQSTHPLKPEAPRLPPGIPESPSCQR. Threonine 31 is modified (phosphothreonine; by PKA). The 160-residue stretch at 35-194 folds into the N-acetyltransferase domain; sequence SEFRCLTPED…SLTFMELHCS (160 aa). Residue leucine 124 coordinates substrate. Residues 124–126 and 132–137 contribute to the acetyl-CoA site; these read LAV and QQGRGP. Position 159 (methionine 159) interacts with substrate. 168 to 170 contributes to the acetyl-CoA binding site; it reads YER. Serine 205 is subject to Phosphoserine.

This sequence belongs to the acetyltransferase family. AANAT subfamily. Monomer. Interacts with several 14-3-3 proteins, including YWHAB, YWHAE, YWHAG and YWHAZ, preferentially when phosphorylated at Thr-31. Phosphorylation on Ser-205 also allows binding to YWHAZ, but with lower affinity. The interaction with YWHAZ considerably increases affinity for arylalkylamines and acetyl-CoA and protects the enzyme from dephosphorylation and proteasomal degradation. It may also prevent thiol-dependent inactivation. Post-translationally, cAMP-dependent phosphorylation on both N-terminal Thr-31 and C-terminal Ser-205 regulates AANAT activity by promoting interaction with 14-3-3 proteins. Highly expressed in pineal gland and at lower levels in the retina. Weak expression in several brain regions and in the pituitary gland.

It localises to the cytoplasm. The enzyme catalyses a 2-arylethylamine + acetyl-CoA = an N-acetyl-2-arylethylamine + CoA + H(+). It participates in aromatic compound metabolism; melatonin biosynthesis; melatonin from serotonin: step 1/2. Functionally, controls the night/day rhythm of melatonin production in the pineal gland. Catalyzes the N-acetylation of serotonin into N-acetylserotonin, the penultimate step in the synthesis of melatonin. This Homo sapiens (Human) protein is Serotonin N-acetyltransferase (AANAT).